Consider the following 464-residue polypeptide: Glutamate--tRNA ligase 1 (464 aa).

The 'HIGH' region signature appears at 8–18 (PSPTGHLHVGG). The 'KMSKS' region signature appears at 231–235 (PLSKR). Lysine 234 contributes to the ATP binding site.

The protein belongs to the class-I aminoacyl-tRNA synthetase family. Glutamate--tRNA ligase type 1 subfamily. In terms of assembly, monomer.

The protein resides in the cytoplasm. It catalyses the reaction tRNA(Glu) + L-glutamate + ATP = L-glutamyl-tRNA(Glu) + AMP + diphosphate. In terms of biological role, catalyzes the attachment of glutamate to tRNA(Glu) in a two-step reaction: glutamate is first activated by ATP to form Glu-AMP and then transferred to the acceptor end of tRNA(Glu). The polypeptide is Glutamate--tRNA ligase 1 (Thermotoga petrophila (strain ATCC BAA-488 / DSM 13995 / JCM 10881 / RKU-1)).